The chain runs to 178 residues: Oligoribonuclease (178 aa).

In terms of domain architecture, Exonuclease spans 7-168 (LIWIDLEMTG…DDIRESIAEL (162 aa)). The active site involves tyrosine 128.

The protein belongs to the oligoribonuclease family.

It localises to the cytoplasm. In terms of biological role, 3'-to-5' exoribonuclease specific for small oligoribonucleotides. This is Oligoribonuclease from Francisella tularensis subsp. holarctica (strain FTNF002-00 / FTA).